The sequence spans 307 residues: Glutaminase (307 aa).

Serine 66, asparagine 117, glutamate 161, asparagine 168, tyrosine 192, tyrosine 243, and valine 261 together coordinate substrate.

It belongs to the glutaminase family. Homotetramer.

The catalysed reaction is L-glutamine + H2O = L-glutamate + NH4(+). In Serratia proteamaculans (strain 568), this protein is Glutaminase.